Here is a 528-residue protein sequence, read N- to C-terminus: PC4 and SFRS1-interacting protein (528 aa).

Residues 7–64 (PGDLIFAKMKGYPHWPARVDEVPDGAVKPPTNKLPIFFFGTHETAFLGPKDIFPYSEN) form the PWWP domain. Residue Lys75 forms a Glycyl lysine isopeptide (Lys-Gly) (interchain with G-Cter in SUMO2) linkage. A disordered region spans residues 86 to 347 (NNPKVKFSSQ…VEKKRETSMD (262 aa)). A compositionally biased stretch (polar residues) spans 92-106 (FSSQQVSTKQSNASS). Residues Ser102, Ser105, and Ser106 each carry the phosphoserine modification. The segment covering 113 to 135 (KETSVSKEDTDQEEKASNEDVTK) has biased composition (basic and acidic residues). A phosphothreonine mark is found at Thr115 and Thr122. Ser129 carries the phosphoserine modification. At Thr141 the chain carries Phosphothreonine. Residues 144 to 153 (AARRGRKRKA) show a composition bias toward basic residues. The short motif at 146-156 (RRGRKRKAEKQ) is the Nuclear localization signal element. Phosphoserine is present on residues Ser176 and Ser205. Over residues 212-260 (DEDKSKKKGPEEKPPKKQLKKEEEGQKEEEKPRKEPDKKEGKKEVESKR) the composition is skewed to basic and acidic residues. Position 270 is a phosphoserine (Ser270). Phosphothreonine is present on Thr271. Phosphoserine occurs at positions 272 and 274. A compositionally biased stretch (basic residues) spans 285–300 (KRKGGRHFQAAHRRNM). Over residues 303 to 347 (GQHEKEAADRKRKQEEQMETEQQTKDEGKKPEVKKVEKKRETSMD) the composition is skewed to basic and acidic residues. Coiled-coil stretches lie at residues 304 to 332 (QHEK…EGKK) and 369 to 393 (NRCI…KHTE). The interval 338–415 (VEKKRETSMD…VSQVIMEKST (78 aa)) is integrase-binding domain (IBD). Ser432 bears the Phosphoserine mark. Thr435 bears the Phosphothreonine mark. Phosphoserine is present on Ser441. Residues 444–471 (EQRQHEEANKTKDQGKKGPNKKLEKEQT) are compositionally biased toward basic and acidic residues. Residues 444–528 (EQRQHEEANK…VSLKESTLDN (85 aa)) are disordered. The segment covering 472-492 (GTKSLNGGSDAQESNHPQHNG) has biased composition (polar residues). Positions 496–528 (EESKDSREAGSKTKTPGEEREAEVSLKESTLDN) are enriched in basic and acidic residues. Arg515 carries the post-translational modification Citrulline. Ser520 carries the post-translational modification Phosphoserine. A Phosphothreonine modification is found at Thr525.

Belongs to the HDGF family. As to quaternary structure, monomer. Interacts with IFRD1/PC4. Interacts (via IBD domain) with POGZ (via IBM motif) and CDCA7L (via IBM motifs). Interacts (via IBD domain) with KMT2A (via IBM motifs) with a moderate affinity whereas interacts with the KMT2A-MEN1 complex with a greater affinity; MEN1 enhances interaction of KMT2A with PSIP1. Interacts (via IBD domain) with IWS1 (via IBM motif), MED1 (via IBM motif) and DBF4 (via IBM motifs). Post-translationally, citrullinated by PADI4.

The protein localises to the nucleus. In terms of biological role, transcriptional coactivator involved in neuroepithelial stem cell differentiation and neurogenesis. Involved in particular in lens epithelial cell gene regulation and stress responses. May play an important role in lens epithelial to fiber cell terminal differentiation. May play a protective role during stress-induced apoptosis. The polypeptide is PC4 and SFRS1-interacting protein (Psip1) (Rattus norvegicus (Rat)).